Consider the following 118-residue polypeptide: Large ribosomal subunit protein bL20 (118 aa).

Belongs to the bacterial ribosomal protein bL20 family.

Its function is as follows. Binds directly to 23S ribosomal RNA and is necessary for the in vitro assembly process of the 50S ribosomal subunit. It is not involved in the protein synthesizing functions of that subunit. This is Large ribosomal subunit protein bL20 from Hahella chejuensis (strain KCTC 2396).